The primary structure comprises 178 residues: Nicotinamide-nucleotide adenylyltransferase (178 aa).

It belongs to the archaeal NMN adenylyltransferase family.

Its subcellular location is the cytoplasm. The enzyme catalyses beta-nicotinamide D-ribonucleotide + ATP + H(+) = diphosphate + NAD(+). It participates in cofactor biosynthesis; NAD(+) biosynthesis; NAD(+) from nicotinamide D-ribonucleotide: step 1/1. This chain is Nicotinamide-nucleotide adenylyltransferase, found in Caldivirga maquilingensis (strain ATCC 700844 / DSM 13496 / JCM 10307 / IC-167).